A 480-amino-acid chain; its full sequence is G-rich sequence factor 1 (480 aa).

The transit peptide at 1-117 directs the protein to the mitochondrion; the sequence is MAGTRWVLGA…AAAAVPTRSY (117 aa). 2 RRM domains span residues 122–246 and 250–326; these read KTTY…SSPV and GVVR…PSRR. Phosphoserine is present on Ser244. Ser335 carries the post-translational modification Phosphoserine. In terms of domain architecture, RRM 3 spans 401 to 480; that stretch reads HFVHMRGLPF…LFLNSCPKGK (80 aa).

In terms of assembly, monomer. Found in a complex with DDX28, DHX30, FASTKD2 and FASTKD5. Interacts with the mitochondrial RNase P complex subunit TRMT10C/MRPP1. Interacts with the 2 components of the mitochondrial degradosome complex, PNPT1 and SUPV3L1, in an RNA-dependent manner.

The protein localises to the mitochondrion matrix. It localises to the cytoplasm. Its function is as follows. Regulator of post-transcriptional mitochondrial gene expression, required for assembly of the mitochondrial ribosome and for recruitment of mRNA and lncRNA. Binds RNAs containing the 14 base G-rich element. Preferentially binds RNAs transcribed from three contiguous genes on the light strand of mtDNA, the ND6 mRNA, and the long non-coding RNAs for MT-CYB and MT-ND5, each of which contains multiple consensus binding sequences. Involved in the degradosome-mediated decay of non-coding mitochondrial transcripts (MT-ncRNA) and tRNA-like molecules. Acts by unwinding G-quadruplex RNA structures in MT-ncRNA, thus facilitating their degradation by the degradosome. G-quadruplexes (G4) are non-canonical 4 stranded structures formed by transcripts from the light strand of mtDNA. This is G-rich sequence factor 1 (GRSF1) from Homo sapiens (Human).